Reading from the N-terminus, the 560-residue chain is 2-succinyl-5-enolpyruvyl-6-hydroxy-3-cyclohexene-1-carboxylate synthase (560 aa).

The protein belongs to the TPP enzyme family. MenD subfamily. As to quaternary structure, homodimer. Mg(2+) is required as a cofactor. Mn(2+) serves as cofactor. It depends on thiamine diphosphate as a cofactor.

It catalyses the reaction isochorismate + 2-oxoglutarate + H(+) = 5-enolpyruvoyl-6-hydroxy-2-succinyl-cyclohex-3-ene-1-carboxylate + CO2. The protein operates within quinol/quinone metabolism; 1,4-dihydroxy-2-naphthoate biosynthesis; 1,4-dihydroxy-2-naphthoate from chorismate: step 2/7. It functions in the pathway quinol/quinone metabolism; menaquinone biosynthesis. Functionally, catalyzes the thiamine diphosphate-dependent decarboxylation of 2-oxoglutarate and the subsequent addition of the resulting succinic semialdehyde-thiamine pyrophosphate anion to isochorismate to yield 2-succinyl-5-enolpyruvyl-6-hydroxy-3-cyclohexene-1-carboxylate (SEPHCHC). The chain is 2-succinyl-5-enolpyruvyl-6-hydroxy-3-cyclohexene-1-carboxylate synthase from Staphylococcus saprophyticus subsp. saprophyticus (strain ATCC 15305 / DSM 20229 / NCIMB 8711 / NCTC 7292 / S-41).